Reading from the N-terminus, the 461-residue chain is UDP-N-acetylmuramate--L-alanine ligase (461 aa).

Residue 111-117 (GAHGKTT) participates in ATP binding.

It belongs to the MurCDEF family.

It localises to the cytoplasm. The enzyme catalyses UDP-N-acetyl-alpha-D-muramate + L-alanine + ATP = UDP-N-acetyl-alpha-D-muramoyl-L-alanine + ADP + phosphate + H(+). The protein operates within cell wall biogenesis; peptidoglycan biosynthesis. Its function is as follows. Cell wall formation. The sequence is that of UDP-N-acetylmuramate--L-alanine ligase from Pelotomaculum thermopropionicum (strain DSM 13744 / JCM 10971 / SI).